The primary structure comprises 274 residues: Nuclease (274 aa).

Positions 1 to 24 (MGICGKLGVAALVALIVGCSPVQS) are cleaved as a signal peptide. The active-site Proton acceptor is histidine 124. Mn(2+) contacts are provided by asparagine 155, aspartate 246, glutamate 249, aspartate 255, phenylalanine 256, glutamine 265, and glutamate 269.

The protein belongs to the DNA/RNA non-specific endonuclease family. Monomer. Mn(2+) is required as a cofactor. The cofactor is Mg(2+). Ca(2+) serves as cofactor. It depends on Co(2+) as a cofactor. The N-terminus is blocked.

The protein resides in the periplasm. Functionally, catalyzes the degradation of both RNA and DNA; has the potential to act as an endonuclease. The chain is Nuclease (nucA) from Nostoc sp. (strain PCC 7120 / SAG 25.82 / UTEX 2576).